We begin with the raw amino-acid sequence, 400 residues long: Glycine betaine/proline betaine transport system ATP-binding protein ProV (400 aa).

The 237-residue stretch at 29-265 folds into the ABC transporter domain; the sequence is LSKEQILEKT…PANDYVRTFF (237 aa). An ATP-binding site is contributed by 61-68; sequence GLSGSGKS. 2 consecutive CBS domains span residues 280-341 and 343-400; these read ARRS…GIEA and LIDD…GNNG.

The protein belongs to the ABC transporter superfamily. The complex is composed of two ATP-binding proteins (ProV), two transmembrane proteins (ProW) and a solute-binding protein (ProX).

The protein localises to the cell inner membrane. Part of the ProU ABC transporter complex involved in glycine betaine and proline betaine uptake. Probably responsible for energy coupling to the transport system. The protein is Glycine betaine/proline betaine transport system ATP-binding protein ProV of Salmonella typhimurium (strain LT2 / SGSC1412 / ATCC 700720).